The sequence spans 383 residues: MAVGRPKRVMIVAGEASGDIYGAGLVRAVQAADPAFSFFGIGGPRMREAGCETLVDSADMAVVGLVEVLKHFDVIAAAFLKLKKILLEDPPDLLILIDYPGFNLRLGKVAKKAGVKVLYYISPQIWAWRQGRVKKIKRLVDHMAVILPFEVPFYEQAGVPVSFVGHPMADLVEVSLTRDQAATSFGLDTSRQIVGLFPGSRRSEVSRLLPTILEAARLLQQCLPGLQFVLPLASTLSDDDLAPWLEGCELPITVTRDRIHDLMRACDAVISVSGTVTLEIALVGTPLVIIYKLSPLTFQLAKRLVKVEHIGLCNIVAGETVARELIQEEASPEQIAGEIGRLLRDAEYNTAFRERLTHVRERLGGGGADRRMAGLVLSMVEQS.

It belongs to the LpxB family.

It carries out the reaction a lipid X + a UDP-2-N,3-O-bis[(3R)-3-hydroxyacyl]-alpha-D-glucosamine = a lipid A disaccharide + UDP + H(+). It functions in the pathway bacterial outer membrane biogenesis; LPS lipid A biosynthesis. Condensation of UDP-2,3-diacylglucosamine and 2,3-diacylglucosamine-1-phosphate to form lipid A disaccharide, a precursor of lipid A, a phosphorylated glycolipid that anchors the lipopolysaccharide to the outer membrane of the cell. The sequence is that of Lipid-A-disaccharide synthase from Trichlorobacter lovleyi (strain ATCC BAA-1151 / DSM 17278 / SZ) (Geobacter lovleyi).